The primary structure comprises 350 residues: Nicotinate-nucleotide--dimethylbenzimidazole phosphoribosyltransferase (350 aa).

Catalysis depends on glutamate 317, which acts as the Proton acceptor.

This sequence belongs to the CobT family.

It catalyses the reaction 5,6-dimethylbenzimidazole + nicotinate beta-D-ribonucleotide = alpha-ribazole 5'-phosphate + nicotinate + H(+). It functions in the pathway nucleoside biosynthesis; alpha-ribazole biosynthesis; alpha-ribazole from 5,6-dimethylbenzimidazole: step 1/2. Functionally, catalyzes the synthesis of alpha-ribazole-5'-phosphate from nicotinate mononucleotide (NAMN) and 5,6-dimethylbenzimidazole (DMB). The chain is Nicotinate-nucleotide--dimethylbenzimidazole phosphoribosyltransferase from Shewanella sp. (strain MR-7).